Consider the following 417-residue polypeptide: MSAEIICVGTELLLGDILNSNSQFLGTELAKLGIPHYYQTVVGDNLERLKQVIKIAISRASILIFTGGLGPTPDDLTTQAIAEFFQTPLEENPEILADITEKFAQIGRKMATNNRKQALIPVGADVLPNPSGTAPGIIWQPQEGVTILTFPGVPSEMKQMWQQTAIPFLKSQGWGKELIYSRMMRFRGIGESALAEKVAHLLELANPTVAPYAGLGEARLRITAKAKSLTDAMALIEPVSQEILTLTGDDYYGADQDTLPSVVGQQLRQVAQTVSVAESCTGGGLGEMLTQIPGSSEYFLGGIIAYDNRVKNALLGVNQQDLDQFGAVSEPVAKQMALGVKEKIGSDWGISITGIAGPGGGTDTKPVGLVYIGIADPNGQVEGFEYRLGTRRDRLAIRYLSACNALDQLRRKLLIKI.

It belongs to the CinA family.

The chain is CinA-like protein from Gloeothece citriformis (strain PCC 7424) (Cyanothece sp. (strain PCC 7424)).